Reading from the N-terminus, the 431-residue chain is Histidinol dehydrogenase (431 aa).

The NAD(+) site is built by tyrosine 127, glutamine 189, and asparagine 212. The substrate site is built by serine 237, glutamine 259, and histidine 262. Zn(2+) is bound by residues glutamine 259 and histidine 262. Catalysis depends on proton acceptor residues glutamate 326 and histidine 327. The substrate site is built by histidine 327, aspartate 360, glutamate 414, and histidine 419. Position 360 (aspartate 360) interacts with Zn(2+). Residue histidine 419 participates in Zn(2+) binding.

Belongs to the histidinol dehydrogenase family. Zn(2+) serves as cofactor.

It catalyses the reaction L-histidinol + 2 NAD(+) + H2O = L-histidine + 2 NADH + 3 H(+). The protein operates within amino-acid biosynthesis; L-histidine biosynthesis; L-histidine from 5-phospho-alpha-D-ribose 1-diphosphate: step 9/9. Functionally, catalyzes the sequential NAD-dependent oxidations of L-histidinol to L-histidinaldehyde and then to L-histidine. This is Histidinol dehydrogenase from Xanthomonas campestris pv. campestris (strain 8004).